The sequence spans 178 residues: UPF0215 protein STK_03040 (178 aa).

It belongs to the UPF0215 family.

The chain is UPF0215 protein STK_03040 from Sulfurisphaera tokodaii (strain DSM 16993 / JCM 10545 / NBRC 100140 / 7) (Sulfolobus tokodaii).